We begin with the raw amino-acid sequence, 508 residues long: Bifunctional purine biosynthesis protein PurH (508 aa).

Residues 1-144 (MTRALLSVSD…KNFASVLPIV (144 aa)) enclose the MGS-like domain.

The protein belongs to the PurH family.

The enzyme catalyses (6R)-10-formyltetrahydrofolate + 5-amino-1-(5-phospho-beta-D-ribosyl)imidazole-4-carboxamide = 5-formamido-1-(5-phospho-D-ribosyl)imidazole-4-carboxamide + (6S)-5,6,7,8-tetrahydrofolate. The catalysed reaction is IMP + H2O = 5-formamido-1-(5-phospho-D-ribosyl)imidazole-4-carboxamide. It participates in purine metabolism; IMP biosynthesis via de novo pathway; 5-formamido-1-(5-phospho-D-ribosyl)imidazole-4-carboxamide from 5-amino-1-(5-phospho-D-ribosyl)imidazole-4-carboxamide (10-formyl THF route): step 1/1. The protein operates within purine metabolism; IMP biosynthesis via de novo pathway; IMP from 5-formamido-1-(5-phospho-D-ribosyl)imidazole-4-carboxamide: step 1/1. The chain is Bifunctional purine biosynthesis protein PurH from Leuconostoc mesenteroides subsp. mesenteroides (strain ATCC 8293 / DSM 20343 / BCRC 11652 / CCM 1803 / JCM 6124 / NCDO 523 / NBRC 100496 / NCIMB 8023 / NCTC 12954 / NRRL B-1118 / 37Y).